A 270-amino-acid chain; its full sequence is uncharacterized protein (270 aa).

It localises to the virion. This is an uncharacterized protein from Acanthamoeba polyphaga (Amoeba).